Consider the following 103-residue polypeptide: NADH-quinone oxidoreductase subunit K 1 (103 aa).

3 helical membrane passes run 7 to 27 (ISWF…GFLF), 31 to 51 (IITV…SFVT), and 63 to 83 (LFTF…LAII).

The protein belongs to the complex I subunit 4L family. NDH-1 is composed of 14 different subunits. Subunits NuoA, H, J, K, L, M, N constitute the membrane sector of the complex.

The protein resides in the cell inner membrane. It carries out the reaction a quinone + NADH + 5 H(+)(in) = a quinol + NAD(+) + 4 H(+)(out). Functionally, NDH-1 shuttles electrons from NADH, via FMN and iron-sulfur (Fe-S) centers, to quinones in the respiratory chain. The immediate electron acceptor for the enzyme in this species is believed to be ubiquinone. Couples the redox reaction to proton translocation (for every two electrons transferred, four hydrogen ions are translocated across the cytoplasmic membrane), and thus conserves the redox energy in a proton gradient. The protein is NADH-quinone oxidoreductase subunit K 1 of Solibacter usitatus (strain Ellin6076).